Here is a 346-residue protein sequence, read N- to C-terminus: Probable alcohol dehydrogenase AdhA (346 aa).

Positions 51, 73, 109, 112, 115, 123, and 165 each coordinate Zn(2+).

Belongs to the zinc-containing alcohol dehydrogenase family. Zn(2+) is required as a cofactor.

It catalyses the reaction a primary alcohol + NAD(+) = an aldehyde + NADH + H(+). The catalysed reaction is a secondary alcohol + NAD(+) = a ketone + NADH + H(+). This Mycobacterium tuberculosis (strain CDC 1551 / Oshkosh) protein is Probable alcohol dehydrogenase AdhA (adhA).